Consider the following 189-residue polypeptide: Elongation factor P (189 aa).

The protein belongs to the elongation factor P family.

It is found in the cytoplasm. It participates in protein biosynthesis; polypeptide chain elongation. In terms of biological role, involved in peptide bond synthesis. Stimulates efficient translation and peptide-bond synthesis on native or reconstituted 70S ribosomes in vitro. Probably functions indirectly by altering the affinity of the ribosome for aminoacyl-tRNA, thus increasing their reactivity as acceptors for peptidyl transferase. This chain is Elongation factor P, found in Chloroflexus aggregans (strain MD-66 / DSM 9485).